We begin with the raw amino-acid sequence, 401 residues long: tRNA-specific 2-thiouridylase MnmA (401 aa).

ATP contacts are provided by residues Gly13 to Ser20 and Met39. The tract at residues Asn99–Asp101 is interaction with target base in tRNA. Cys104 acts as the Nucleophile in catalysis. A disulfide bridge connects residues Cys104 and Cys202. Gly128 is a binding site for ATP. The interval Lys152 to Gln154 is interaction with tRNA. Cys202 serves as the catalytic Cysteine persulfide intermediate. Residues Arg329 to Tyr330 form an interaction with tRNA region.

This sequence belongs to the MnmA/TRMU family.

It is found in the cytoplasm. It catalyses the reaction S-sulfanyl-L-cysteinyl-[protein] + uridine(34) in tRNA + AH2 + ATP = 2-thiouridine(34) in tRNA + L-cysteinyl-[protein] + A + AMP + diphosphate + H(+). Functionally, catalyzes the 2-thiolation of uridine at the wobble position (U34) of tRNA, leading to the formation of s(2)U34. The sequence is that of tRNA-specific 2-thiouridylase MnmA from Polaromonas sp. (strain JS666 / ATCC BAA-500).